We begin with the raw amino-acid sequence, 83 residues long: Acid shock protein (83 aa).

Residues 1–21 (MKKVLALVVAAAMGLSSAAFA) form the signal peptide. Residues 22 to 40 (AETATPAKTATPAKTTQNT) are compositionally biased toward low complexity. Residues 22 to 56 (AETATPAKTATPAKTTQNTQHHKKQHKKTVEQKAQ) constitute a propeptide that is removed on maturation. The disordered stretch occupies residues 22-83 (AETATPAKTA…TSKTTSQPAA (62 aa)). Residues 57-70 (AAKKHQKKDGKKAP) are compositionally biased toward basic residues. Positions 71-83 (AKSTSKTTSQPAA) are enriched in low complexity.

It belongs to the Asr family. Post-translationally, proteolytic processing gives rise to the active protein.

The protein resides in the periplasm. Functionally, required for growth and/or survival at acidic conditions. The chain is Acid shock protein from Salmonella heidelberg (strain SL476).